The primary structure comprises 218 residues: Adenylate kinase (218 aa).

10-15 (GAGKGT) serves as a coordination point for ATP. The segment at 30–59 (STGDMLRAAVKAGSEMGLKAKAVMDAGQLV) is NMP. Residues threonine 31, arginine 36, 57-59 (QLV), 85-88 (GFPR), and glutamine 92 contribute to the AMP site. The segment at 122–159 (GRRVHEASGRTYHLVYNPPKVEGKDDVTGEDLVQRADD) is LID. Residues arginine 123 and 132-133 (TY) contribute to the ATP site. Residues arginine 156 and arginine 167 each coordinate AMP. Glycine 203 provides a ligand contact to ATP.

This sequence belongs to the adenylate kinase family. Monomer.

Its subcellular location is the cytoplasm. It carries out the reaction AMP + ATP = 2 ADP. It participates in purine metabolism; AMP biosynthesis via salvage pathway; AMP from ADP: step 1/1. Catalyzes the reversible transfer of the terminal phosphate group between ATP and AMP. Plays an important role in cellular energy homeostasis and in adenine nucleotide metabolism. In Marinomonas sp. (strain MWYL1), this protein is Adenylate kinase.